We begin with the raw amino-acid sequence, 299 residues long: ATP phosphoribosyltransferase (299 aa).

This sequence belongs to the ATP phosphoribosyltransferase family. Long subfamily. The cofactor is Mg(2+).

The protein resides in the cytoplasm. It catalyses the reaction 1-(5-phospho-beta-D-ribosyl)-ATP + diphosphate = 5-phospho-alpha-D-ribose 1-diphosphate + ATP. The protein operates within amino-acid biosynthesis; L-histidine biosynthesis; L-histidine from 5-phospho-alpha-D-ribose 1-diphosphate: step 1/9. Feedback inhibited by histidine. Functionally, catalyzes the condensation of ATP and 5-phosphoribose 1-diphosphate to form N'-(5'-phosphoribosyl)-ATP (PR-ATP). Has a crucial role in the pathway because the rate of histidine biosynthesis seems to be controlled primarily by regulation of HisG enzymatic activity. This Shewanella sediminis (strain HAW-EB3) protein is ATP phosphoribosyltransferase.